Consider the following 426-residue polypeptide: Dihydroorotase (426 aa).

2 residues coordinate Zn(2+): His61 and His63. Residues 63–65 (HCR) and Asn95 contribute to the substrate site. Residues Glu146, His180, His229, and Asp297 each contribute to the Zn(2+) site. Asp297 is a catalytic residue. Residue His301 participates in substrate binding.

The protein belongs to the metallo-dependent hydrolases superfamily. DHOase family. Class I DHOase subfamily. Zn(2+) serves as cofactor.

The catalysed reaction is (S)-dihydroorotate + H2O = N-carbamoyl-L-aspartate + H(+). The protein operates within pyrimidine metabolism; UMP biosynthesis via de novo pathway; (S)-dihydroorotate from bicarbonate: step 3/3. In terms of biological role, catalyzes the reversible cyclization of carbamoyl aspartate to dihydroorotate. The protein is Dihydroorotase of Methanopyrus kandleri (strain AV19 / DSM 6324 / JCM 9639 / NBRC 100938).